Here is a 101-residue protein sequence, read N- to C-terminus: Small ribosomal subunit protein uS14 (101 aa).

This sequence belongs to the universal ribosomal protein uS14 family. As to quaternary structure, part of the 30S ribosomal subunit. Contacts proteins S3 and S10.

Functionally, binds 16S rRNA, required for the assembly of 30S particles and may also be responsible for determining the conformation of the 16S rRNA at the A site. This is Small ribosomal subunit protein uS14 from Ehrlichia ruminantium (strain Welgevonden).